A 252-amino-acid polypeptide reads, in one-letter code: Imidazole glycerol phosphate synthase subunit HisF (252 aa).

Active-site residues include D11 and D130.

This sequence belongs to the HisA/HisF family. In terms of assembly, heterodimer of HisH and HisF.

Its subcellular location is the cytoplasm. The catalysed reaction is 5-[(5-phospho-1-deoxy-D-ribulos-1-ylimino)methylamino]-1-(5-phospho-beta-D-ribosyl)imidazole-4-carboxamide + L-glutamine = D-erythro-1-(imidazol-4-yl)glycerol 3-phosphate + 5-amino-1-(5-phospho-beta-D-ribosyl)imidazole-4-carboxamide + L-glutamate + H(+). Its pathway is amino-acid biosynthesis; L-histidine biosynthesis; L-histidine from 5-phospho-alpha-D-ribose 1-diphosphate: step 5/9. In terms of biological role, IGPS catalyzes the conversion of PRFAR and glutamine to IGP, AICAR and glutamate. The HisF subunit catalyzes the cyclization activity that produces IGP and AICAR from PRFAR using the ammonia provided by the HisH subunit. This Hyphomonas neptunium (strain ATCC 15444) protein is Imidazole glycerol phosphate synthase subunit HisF.